Reading from the N-terminus, the 128-residue chain is Small ribosomal subunit protein uS11 (128 aa).

This sequence belongs to the universal ribosomal protein uS11 family. Part of the 30S ribosomal subunit. Interacts with proteins S7 and S18. Binds to IF-3.

Located on the platform of the 30S subunit, it bridges several disparate RNA helices of the 16S rRNA. Forms part of the Shine-Dalgarno cleft in the 70S ribosome. The sequence is that of Small ribosomal subunit protein uS11 from Porphyromonas gingivalis (strain ATCC BAA-308 / W83).